The sequence spans 97 residues: MESSTSSSGSALGAVDPQLQHFIEVETQKQRFQQLVHQMTELCWEKCMDKPGPKLDSRAEACFVNCVERFIDTSQFILNRLEQTQKSKPVFSESLSD.

Residues 43–66 carry the Twin CX3C motif motif; the sequence is CWEKCMDKPGPKLDSRAEACFVNC. Disulfide bonds link Cys43/Cys66 and Cys47/Cys62. Ser57, Ser87, Ser94, and Ser96 each carry phosphoserine.

Belongs to the small Tim family. In terms of assembly, heterohexamer; composed of 3 copies of TIMM8A and 3 copies of TIMM13, named soluble 70 kDa complex. Associates with the TIM22 complex, whose core is composed of TIMM22. In terms of tissue distribution, present at high level in liver and brain, and at lower level in muscle and heart. In CNS sections, it is predominantly present in the soma and the dendritic portion of the Purkinje cells of the cerebellum, but not in the glial cells. Scattered expression also is also detected in the brain stem, olfactory bulb, substantia nigra, hippocampus and striatum (at protein level). Ubiquitously expressed.

The protein localises to the mitochondrion inner membrane. Its function is as follows. Mitochondrial intermembrane chaperone that participates in the import and insertion of some multi-pass transmembrane proteins into the mitochondrial inner membrane. Also required for the transfer of beta-barrel precursors from the TOM complex to the sorting and assembly machinery (SAM complex) of the outer membrane. Acts as a chaperone-like protein that protects the hydrophobic precursors from aggregation and guide them through the mitochondrial intermembrane space. The TIMM8-TIMM13 complex mediates the import of proteins such as TIMM23, SLC25A12/ARALAR1 and SLC25A13/ARALAR2, while the predominant TIMM9-TIMM10 70 kDa complex mediates the import of much more proteins. This Mus musculus (Mouse) protein is Mitochondrial import inner membrane translocase subunit Tim8 A (Timm8a1).